Consider the following 134-residue polypeptide: TSC22 domain family protein 3 (134 aa).

Met-1 bears the N-acetylmethionine mark. The segment at 1 to 60 (MNTEMYQTPMEVAVYQLHNFSISFFSSLLGGDVVSVKLDNSASGASVVAIDNKIEQAMDL) is AP1-binding. Residues Ala-42 and Val-73 each carry the phosphoserine modification. The leucine-zipper stretch occupies residues 76 to 97 (LKEQIRELVEKNSQLERENTLL). Position 102 is a phosphoserine (Ser-102). The disordered stretch occupies residues 108 to 134 (KFQSCLSPEEPAPESPQVPEAPGGSAV).

Belongs to the TSC-22/Dip/Bun family. As to quaternary structure, can form homodimers, however it is likely to function as a monomer. Interacts with NFKB1. Interacts (via N-terminus) with JUN and FOS; these interactions inhibit the binding of active AP1 to its target DNA. Interacts with MYOD1. Interacts with HDAC1; this interaction affects HDAC1 activity on MYOG promoter and thus inhibits MYOD1 transcriptional activity. Ubiquitously expressed, including in the fetal brain and liver. Expressed in brain, lung, spleen and skeletal muscle. Lower levels detected in heart and kidney. Not detected in the pancreas. In non-lymphoid tissues, in the absence of inflammation, the major source of constitutive expression is the macrophage lineage. Also expressed in cells from different hemopoietic cell lineages, including bone marrow cells, CD34+ stem cells, mature B- and T-cells, monocytes and granulocytes. Down-regulated in activated macrophages from inflammatory lesions of delayed-type hypersensitivity (DTH) reactions, such as in tuberculosis and in Crohn disease, whereas in Burkitt lymphoma, persists in macrophages involved in the phagocytosis of apoptotic malignant cells.

It is found in the cytoplasm. The protein localises to the nucleus. In terms of biological role, protects T-cells from IL2 deprivation-induced apoptosis through the inhibition of FOXO3A transcriptional activity that leads to the down-regulation of the pro-apoptotic factor BCL2L11. In macrophages, plays a role in the anti-inflammatory and immunosuppressive effects of glucocorticoids and IL10. In T-cells, inhibits anti-CD3-induced NFKB1 nuclear translocation and thereby NFKB1 DNA-binding activities. In vitro, suppresses AP-1 transcription factor complex DNA-binding activities. Inhibits myogenic differentiation and mediates anti-myogenic effects of glucocorticoids by binding and regulating MYOD1 and HDAC1 transcriptional activity resulting in reduced expression of MYOG. The sequence is that of TSC22 domain family protein 3 from Homo sapiens (Human).